A 341-amino-acid polypeptide reads, in one-letter code: MSKPTVGINGFGRIGRLVLRAAVEKDSVNVVAVNDPFISIDYMVYLFQYDSTHGRFKGTVKHEGDYLIVANEGKSQHKIKVYNSKDPAEIQWGAAGADYVVESTGVFTTIEKANAHLKGGAKKVIISAPSADAPMFVVGVNHEKYDHANDHIISNASCTTNCLAPLAKVINDNFGIIEGLMTTVHAVTATQKTVDGPSGKLWRDGRGAGQNIIPASTGAAKAVGKVIPELNGKLTGMAFRVPTPDVSVVDLTARLEKPASLDDIKRVIKAAAEGPLKGVLAYTEDQVVSTDFVSDTHSSIFDAGASIILNPNFVKLISWYDNEFGYSNRVVDLISYIATKA.

Residues 13–14, Asp-35, and Lys-85 each bind NAD(+); that span reads RI. D-glyceraldehyde 3-phosphate is bound by residues 157–159, Thr-188, 217–218, and Arg-240; these read SCT and TG. Residue Cys-158 is the Nucleophile of the active site. Residue Asn-322 participates in NAD(+) binding.

It belongs to the glyceraldehyde-3-phosphate dehydrogenase family. As to quaternary structure, homotetramer.

The protein localises to the cytoplasm. The enzyme catalyses D-glyceraldehyde 3-phosphate + phosphate + NAD(+) = (2R)-3-phospho-glyceroyl phosphate + NADH + H(+). The protein operates within carbohydrate degradation; glycolysis; pyruvate from D-glyceraldehyde 3-phosphate: step 1/5. The protein is Glyceraldehyde-3-phosphate dehydrogenase 2 of Caenorhabditis briggsae.